Consider the following 240-residue polypeptide: 1-(5-phosphoribosyl)-5-[(5-phosphoribosylamino)methylideneamino] imidazole-4-carboxamide isomerase (240 aa).

The Proton acceptor role is filled by D8. The active-site Proton donor is the D129.

It belongs to the HisA/HisF family.

It localises to the cytoplasm. The enzyme catalyses 1-(5-phospho-beta-D-ribosyl)-5-[(5-phospho-beta-D-ribosylamino)methylideneamino]imidazole-4-carboxamide = 5-[(5-phospho-1-deoxy-D-ribulos-1-ylimino)methylamino]-1-(5-phospho-beta-D-ribosyl)imidazole-4-carboxamide. The protein operates within amino-acid biosynthesis; L-histidine biosynthesis; L-histidine from 5-phospho-alpha-D-ribose 1-diphosphate: step 4/9. The protein is 1-(5-phosphoribosyl)-5-[(5-phosphoribosylamino)methylideneamino] imidazole-4-carboxamide isomerase of Listeria monocytogenes serotype 4b (strain F2365).